A 311-amino-acid polypeptide reads, in one-letter code: Ornithine carbamoyltransferase (311 aa).

Carbamoyl phosphate is bound by residues 52-55 (STRT), Gln-79, Arg-103, and 129-132 (HPVQ). Residues Asn-167, Asp-226, and 230-231 (SM) contribute to the L-ornithine site. Carbamoyl phosphate is bound by residues 266–267 (CL) and Arg-294.

Belongs to the aspartate/ornithine carbamoyltransferase superfamily. OTCase family.

Its subcellular location is the cytoplasm. It catalyses the reaction carbamoyl phosphate + L-ornithine = L-citrulline + phosphate + H(+). It participates in amino-acid biosynthesis; L-arginine biosynthesis; L-arginine from L-ornithine and carbamoyl phosphate: step 1/3. Functionally, reversibly catalyzes the transfer of the carbamoyl group from carbamoyl phosphate (CP) to the N(epsilon) atom of ornithine (ORN) to produce L-citrulline. The polypeptide is Ornithine carbamoyltransferase (Sorangium cellulosum (strain So ce56) (Polyangium cellulosum (strain So ce56))).